We begin with the raw amino-acid sequence, 731 residues long: MSSSLIFKLFFFSLFFSNRLASRLDSDDDGKNIYIVYMGRKLEDPDSAHLHHRAMLEQVVGSTFAPESVLHTYKRSFNGFAVKLTEEEAEKIASMEGVVSVFLNEMNELHTTRSWDFLGFPLTVPRRSQVESNIVVGVLDTGIWPESPSFDDEGFSPPPPKWKGTCETSNNFRCNRKIIGARSYHIGRPISPGDVNGPRDTNGHGTHTASTAAGGLVSQANLYGLGLGTARGGVPLARIAAYKVCWNDGCSDTDILAAYDDAIADGVDIISLSVGGANPRHYFVDAIAIGSFHAVERGILTSNSAGNGGPNFFTTASLSPWLLSVAASTMDRKFVTQVQIGNGQSFQGVSINTFDNQYYPLVSGRDIPNTGFDKSTSRFCTDKSVNPNLLKGKIVVCEASFGPHEFFKSLDGAAGVLMTSNTRDYADSYPLPSSVLDPNDLLATLRYIYSIRSPGATIFKSTTILNASAPVVVSFSSRGPNRATKDVIKPDISGPGVEILAAWPSVAPVGGIRRNTLFNIISGTSMSCPHITGIATYVKTYNPTWSPAAIKSALMTTASPMNARFNPQAEFAYGSGHVNPLKAVRPGLVYDANESDYVKFLCGQGYNTQAVRRITGDYSACTSGNTGRVWDLNYPSFGLSVSPSQTFNQYFNRTLTSVAPQASTYRAMISAPQGLTISVNPNVLSFNGLGDRKSFTLTVRGSIKGFVVSASLVWSDGVHYVRSPITITSLV.

The first 22 residues, 1–22 (MSSSLIFKLFFFSLFFSNRLAS), serve as a signal peptide directing secretion. The propeptide at 23–110 (RLDSDDDGKN…VFLNEMNELH (88 aa)) is activation peptide. The Inhibitor I9 domain occupies 34-110 (YIVYMGRKLE…VFLNEMNELH (77 aa)). The Peptidase S8 domain maps to 114–584 (SWDFLGFPLT…SGHVNPLKAV (471 aa)). The Charge relay system role is filled by aspartate 140. Cysteine 166 and cysteine 174 form a disulfide bridge. Catalysis depends on histidine 204, which acts as the Charge relay system. Cystine bridges form between cysteine 245–cysteine 250 and cysteine 380–cysteine 397. An N-linked (GlcNAc...) asparagine glycan is attached at asparagine 466. Serine 525 functions as the Charge relay system in the catalytic mechanism. Residues 616 to 731 (GDYSACTSGN…RSPITITSLV (116 aa)) constitute a propeptide that is removed on maturation. Asparagine 652 carries an N-linked (GlcNAc...) asparagine glycan.

This sequence belongs to the peptidase S8 family. As to quaternary structure, monomer and dimer. In terms of processing, the C-terminal propeptide is autocleaved. Specifically expressed in fruits. Expressed in sarcocarp (at protein level).

It localises to the secreted. It carries out the reaction Hydrolysis of proteins with broad specificity.. This Cucumis melo (Muskmelon) protein is Cucumisin.